The primary structure comprises 669 residues: UvrABC system protein B (669 aa).

The Helicase ATP-binding domain maps to 26–183; sequence TNFHAGIAKQ…RHLTELQYTR (158 aa). Residue 39–46 participates in ATP binding; the sequence is GVTGSGKT. Positions 92-115 match the Beta-hairpin motif; the sequence is YYDYYQPEAYVPASDTFIEKDSSI. In terms of domain architecture, Helicase C-terminal spans 431-597; the sequence is QVDDLISQIN…SVVRPISDIL (167 aa). The UVR domain occupies 631 to 666; sequence AAQMKVLEQKMYQHARDLEFEDAARIRDQIQRLREA.

It belongs to the UvrB family. Forms a heterotetramer with UvrA during the search for lesions. Interacts with UvrC in an incision complex.

The protein resides in the cytoplasm. The UvrABC repair system catalyzes the recognition and processing of DNA lesions. A damage recognition complex composed of 2 UvrA and 2 UvrB subunits scans DNA for abnormalities. Upon binding of the UvrA(2)B(2) complex to a putative damaged site, the DNA wraps around one UvrB monomer. DNA wrap is dependent on ATP binding by UvrB and probably causes local melting of the DNA helix, facilitating insertion of UvrB beta-hairpin between the DNA strands. Then UvrB probes one DNA strand for the presence of a lesion. If a lesion is found the UvrA subunits dissociate and the UvrB-DNA preincision complex is formed. This complex is subsequently bound by UvrC and the second UvrB is released. If no lesion is found, the DNA wraps around the other UvrB subunit that will check the other stand for damage. This chain is UvrABC system protein B, found in Xylella fastidiosa (strain M23).